A 254-amino-acid chain; its full sequence is Zinc import ATP-binding protein ZnuC (254 aa).

The ABC transporter domain occupies 5–221 (ICAADLSVSH…PAYRALFGSE (217 aa)). 38–45 (GPNGSGKS) contacts ATP. Positions 234–245 (DHDHDHVAEGHR) are enriched in basic and acidic residues. The disordered stretch occupies residues 234-254 (DHDHDHVAEGHRHGPACAHPH).

It belongs to the ABC transporter superfamily. Zinc importer (TC 3.A.1.15.5) family. The complex is composed of two ATP-binding proteins (ZnuC), two transmembrane proteins (ZnuB) and a solute-binding protein (ZnuA).

It is found in the cell inner membrane. The catalysed reaction is Zn(2+)(out) + ATP(in) + H2O(in) = Zn(2+)(in) + ADP(in) + phosphate(in) + H(+)(in). Functionally, part of the ABC transporter complex ZnuABC involved in zinc import. Responsible for energy coupling to the transport system. The polypeptide is Zinc import ATP-binding protein ZnuC (Paracoccus denitrificans (strain Pd 1222)).